A 317-amino-acid chain; its full sequence is Orange carotenoid-binding protein (317 aa).

The 152-residue stretch at 18–169 (ADVVPATIAR…DMGFDTSKLG (152 aa)) folds into the OCP N-terminal domain. 3'-hydroxyechinenone is bound by residues L37, Y203, and W290.

Belongs to the orange carotenoid-binding protein family. In terms of assembly, homodimer. 3'-hydroxyechinenone is required as a cofactor. Post-translationally, proteolytically cleaved into a red 16.7 kDa form named red carotenoid-binding protein (RCP) which lacks 15 residues from the N-terminus and approximately 150 residues from the C-terminus.

It localises to the cellular thylakoid membrane. Functionally, acts as a blue-light photoreceptor and photo-protectant. Essential for inhibiting damaged induced by excess blue-green light via a process known as non-photochemical quenching (NPQ). Binding carotenoids improves OCP's intrinsic photoprotectant activity by broadening its absorption spectrum and facilitating the dissipation of absorbed energy. In the dark or dim light the stable inactive form (OCP-O) is orange, upon illumination with blue-green light it converts to a metastable active red form (OCP-R), inducing energy dissipation, quenching cellular fluorescence via NPQ. The chain is Orange carotenoid-binding protein from Limnospira maxima (Arthrospira maxima).